The sequence spans 417 residues: Histidine--tRNA ligase (417 aa).

The protein belongs to the class-II aminoacyl-tRNA synthetase family.

It localises to the cytoplasm. The enzyme catalyses tRNA(His) + L-histidine + ATP = L-histidyl-tRNA(His) + AMP + diphosphate + H(+). This is Histidine--tRNA ligase from Pyrobaculum neutrophilum (strain DSM 2338 / JCM 9278 / NBRC 100436 / V24Sta) (Thermoproteus neutrophilus).